The chain runs to 831 residues: MSNYDFKKIEQFSQSLWDFSSCDFQRKKYYVLSMFPYPSGKLHIGHLRNYVIGDVLARYKRSQGYNVLHPIGWDAFGLPAEKAAINSNIHPRIWTEKNIAKMRTSLKSIGLSYDWSRELSTCSPKYYEHEQKFFLAFLKAGLAYRKNSEVNWDPIDKTVLANEQVIDGRGWRSGAVVVKRKIPQWFLKISDFSEELLKGLESLTGWPEKVKTMQTNWIGKSEGAVIKFSISGYEERFIEVFTTRPETIFGASFCAISVNHPLVNELNLLSNAEREILRIQTTCESDHYDDNKNFSGTTNLEKVHEQKLGILTKIKVKHPFSGDELPLYVANFVFAEYGSGAIFGCPAHDTRDFAFAQQYNLPCLRVISAKCTNTALPYCLEEGVMCNSNFLDGMQVIEARKFIIEKISSIGIGEAKNSYRLRDWGISRQRYWGCPIPVVYCEKCSMQPVKVEDLPVTLPEEVEFTVQGNPLEHHPTWKYTNCPKCGGPAVRDTDTFDTFFESSWYFAAFCSKEGGIVKESCKRFLPVDMYIGGIEHAILHLLYARFFTRALNKCGYIDIVEPFRNLLTQGMVCHETYQNSSGEYLYPEEAKSLLEKGEKVLVGKIEKMSKSKKNVVDLEEIVSKYGADAARFFILSDNPPENSFGWSDRGINASFKFLQRIKNLVERYLSSKNSGEVQTGQNVKIQINKIICDMTKYMDEIKLNCAVAKIHELVNLLSASGALSKETIHVLLRILEPFAPHLAEYLASKLENNVILYGSPWVAYNEVLTQSDAVTLMVRKNGKFVQLLEVKKDSSEEEIISQAKRLIKNAVVDKVIYVPGKMVNFLCSSPG.

Positions 36–46 (PYPSGKLHIGH) match the 'HIGH' region motif. The 'KMSKS' region signature appears at 607–611 (KMSKS). Lysine 610 serves as a coordination point for ATP.

The protein belongs to the class-I aminoacyl-tRNA synthetase family.

The protein localises to the cytoplasm. The catalysed reaction is tRNA(Leu) + L-leucine + ATP = L-leucyl-tRNA(Leu) + AMP + diphosphate. This is Leucine--tRNA ligase from Neorickettsia sennetsu (strain ATCC VR-367 / Miyayama) (Ehrlichia sennetsu).